Here is a 20-residue protein sequence, read N- to C-terminus: Apidaecin 1+ (20 aa).

Residues 1 to 20 (GKPNRPRPAPIQPRPPHPRL) form a disordered region.

This sequence belongs to the apidaecin family.

It localises to the secreted. Functionally, antimicrobial peptide active against many Gram-negative enterobacterial and plant-associated bacterial species. Not active against other bacterial species like H.pylori, P.mirabilis, B.pertussis or N.gonorrhoeae. Its function is as follows. Among others, also active against C.jejuni and L.pneumophila but not against Y.enterocolitica. Among others, also active against Y.enterocolitica butnot against L.pneumophila and C.jejuni. In Pimpla disparis (Parasitic wasp), this protein is Apidaecin 1+.